The following is a 330-amino-acid chain: Aspartate--ammonia ligase (330 aa).

This sequence belongs to the class-II aminoacyl-tRNA synthetase family. AsnA subfamily.

It is found in the cytoplasm. It carries out the reaction L-aspartate + NH4(+) + ATP = L-asparagine + AMP + diphosphate + H(+). The protein operates within amino-acid biosynthesis; L-asparagine biosynthesis; L-asparagine from L-aspartate (ammonia route): step 1/1. The protein is Aspartate--ammonia ligase of Shigella boydii serotype 18 (strain CDC 3083-94 / BS512).